The chain runs to 214 residues: Large ribosomal subunit protein uL4c (214 aa).

Residues 43-80 are disordered; sequence KQSNEKRQGSANTKTRSEVRGGGRKPWRQKGTGRARAG. Basic residues predominate over residues 64–75; it reads GGRKPWRQKGTG.

Belongs to the universal ribosomal protein uL4 family. In terms of assembly, part of the 50S ribosomal subunit.

It is found in the plastid. The protein localises to the chloroplast. Functionally, probably binds the 23S rRNA. The protein is Large ribosomal subunit protein uL4c (rpl4) of Porphyra purpurea (Red seaweed).